Reading from the N-terminus, the 98-residue chain is MLEFLLRFFGRDTASSKKVAKERLRLVLVHDRAGVSPHLLESLKNDLIKVISEYLDIDTDGLEVSLTHENDAVALVANIPILRVKRTFKSVQEPAFKV.

This sequence belongs to the MinE family.

In terms of biological role, prevents the cell division inhibition by proteins MinC and MinD at internal division sites while permitting inhibition at polar sites. This ensures cell division at the proper site by restricting the formation of a division septum at the midpoint of the long axis of the cell. This Moorella thermoacetica (strain ATCC 39073 / JCM 9320) protein is Cell division topological specificity factor.